The following is a 707-amino-acid chain: D-(-)-3-hydroxybutyrate oligomer hydrolase (707 aa).

Positions 1–24 are cleaved as a signal peptide; sequence MHHDNFRRLGNAAFAAAAALLAVA. Serine 311 (charge relay system) is an active-site residue.

The protein belongs to the D-(-)-3-hydroxybutyrate oligomer hydrolase family.

It is found in the secreted. It carries out the reaction (3R)-hydroxybutanoate dimer + H2O = 2 (R)-3-hydroxybutanoate + H(+). It functions in the pathway lipid metabolism; butanoate metabolism. In terms of biological role, participates in the degradation of poly-3-hydroxybutyrate (PHB). It works downstream of poly(3-hydroxybutyrate) depolymerase, hydrolyzing D(-)-3-hydroxybutyrate oligomers of various length (3HB-oligomers) into 3HB-monomers. This is D-(-)-3-hydroxybutyrate oligomer hydrolase from Cupriavidus pinatubonensis (strain JMP 134 / LMG 1197) (Cupriavidus necator (strain JMP 134)).